The chain runs to 215 residues: Glycerol-3-phosphate acyltransferase (215 aa).

6 helical membrane passes run 3–23 (LILL…LWIG), 42–61 (TNTF…LIDI), 68–90 (TLLP…FAVL), 110–130 (AGVL…VFVL), 134–154 (LFSM…ISVL), and 162–182 (LLPS…AIII).

Belongs to the PlsY family. As to quaternary structure, probably interacts with PlsX.

Its subcellular location is the cell membrane. It catalyses the reaction an acyl phosphate + sn-glycerol 3-phosphate = a 1-acyl-sn-glycero-3-phosphate + phosphate. It participates in lipid metabolism; phospholipid metabolism. Catalyzes the transfer of an acyl group from acyl-phosphate (acyl-PO(4)) to glycerol-3-phosphate (G3P) to form lysophosphatidic acid (LPA). This enzyme utilizes acyl-phosphate as fatty acyl donor, but not acyl-CoA or acyl-ACP. The protein is Glycerol-3-phosphate acyltransferase of Streptococcus equi subsp. equi (strain 4047).